The primary structure comprises 404 residues: Cysteine desulfurase IscS (404 aa).

Pyridoxal 5'-phosphate contacts are provided by residues 75–76 (AT), N155, Q183, and 203–205 (SAH). Residue K206 is modified to N6-(pyridoxal phosphate)lysine. Position 243 (T243) interacts with pyridoxal 5'-phosphate. C328 (cysteine persulfide intermediate) is an active-site residue. Residue C328 coordinates [2Fe-2S] cluster.

It belongs to the class-V pyridoxal-phosphate-dependent aminotransferase family. NifS/IscS subfamily. Homodimer. Forms a heterotetramer with IscU, interacts with other sulfur acceptors. Pyridoxal 5'-phosphate is required as a cofactor.

Its subcellular location is the cytoplasm. The catalysed reaction is (sulfur carrier)-H + L-cysteine = (sulfur carrier)-SH + L-alanine. It functions in the pathway cofactor biosynthesis; iron-sulfur cluster biosynthesis. Functionally, master enzyme that delivers sulfur to a number of partners involved in Fe-S cluster assembly, tRNA modification or cofactor biosynthesis. Catalyzes the removal of elemental sulfur atoms from cysteine to produce alanine. Functions as a sulfur delivery protein for Fe-S cluster synthesis onto IscU, an Fe-S scaffold assembly protein, as well as other S acceptor proteins. In Neisseria meningitidis serogroup A / serotype 4A (strain DSM 15465 / Z2491), this protein is Cysteine desulfurase IscS.